A 917-amino-acid polypeptide reads, in one-letter code: PAX3- and PAX7-binding protein 1 (917 aa).

Residues 1-11 show a composition bias toward basic residues; that stretch reads MFRKARRVNVR. Disordered stretches follow at residues 1–123, 143–205, and 229–275; these read MFRK…FKVK, LEKS…GAFS, and RKKR…RIVF. Serine 16 carries the phosphoserine modification. The span at 16 to 28 shows a compositional bias: acidic residues; it reads SEEEERERDEEQE. Composition is skewed to gly residues over residues 40–50 and 73–85; these read EEAGPGGGDRA and AEAG…GAEP. Lysine 149 is covalently cross-linked (Glycyl lysine isopeptide (Lys-Gly) (interchain with G-Cter in SUMO1); alternate). Lysine 149 is covalently cross-linked (Glycyl lysine isopeptide (Lys-Gly) (interchain with G-Cter in SUMO2); alternate). Phosphoserine occurs at positions 154, 155, and 158. A compositionally biased stretch (basic and acidic residues) spans 161–172; that stretch reads PLDKTGHVKDTN. Over residues 183-193 the composition is skewed to acidic residues; that stretch reads GEDEMDMESEK. Phosphoserine is present on serine 191. Over residues 234–256 the composition is skewed to basic and acidic residues; sequence MARELGDFTPHDNEPGKGRLVRE. Residues 257 to 268 are compositionally biased toward acidic residues; it reads DENDASDDEDDD. 2 positions are modified to phosphoserine: serine 262 and serine 295. Disordered stretches follow at residues 362-381 and 530-564; these read SSDA…TPSN and AERE…EETS. The interval 378 to 558 is necessary and sufficient for interaction with PAX7; that stretch reads TPSNEMTPVT…MADHLEGLSS (181 aa). The segment covering 542-554 has biased composition (basic and acidic residues); sequence AREQTGKMADHLE. Residues serine 557 and serine 558 each carry the phosphoserine modification. Residue threonine 563 is modified to Phosphothreonine.

Belongs to the GCF family. Interacts with PAX3 and PAX7. Interacts with WDR5; associates with a histone methyltransferase (HMT) complex composed at least of RBBP5, ASH2L, SET1, SET2 and KMT2A/MLL1, KMT2D/MLL2, KMT2C/MLL3 and KMT2B/MLL4 through direct interaction with WDR5. As to expression, ubiquitous.

It is found in the nucleus. Its function is as follows. Adapter protein linking the transcription factors PAX3 and PAX7 to the histone methylation machinery and involved in myogenesis. Associates with a histone methyltransferase complex that specifically mediates dimethylation and trimethylation of 'Lys-4' of histone H3. Mediates the recruitment of that complex to the transcription factors PAX3 and PAX7 on chromatin to regulate the expression of genes involved in muscle progenitor cells proliferation including ID3 and CDC20. In Homo sapiens (Human), this protein is PAX3- and PAX7-binding protein 1 (PAXBP1).